The chain runs to 298 residues: Probable endonuclease 4 (298 aa).

The Zn(2+) site is built by His69, His111, Glu146, Asp180, His183, His215, Asp228, His230, and Glu260.

Belongs to the AP endonuclease 2 family. Requires Zn(2+) as cofactor.

The catalysed reaction is Endonucleolytic cleavage to 5'-phosphooligonucleotide end-products.. Functionally, endonuclease IV plays a role in DNA repair. It cleaves phosphodiester bonds at apurinic or apyrimidinic (AP) sites, generating a 3'-hydroxyl group and a 5'-terminal sugar phosphate. In Bacillus mycoides (strain KBAB4) (Bacillus weihenstephanensis), this protein is Probable endonuclease 4.